Reading from the N-terminus, the 156-residue chain is Nucleoredoxin-like protein 2 (156 aa).

Residues 9-147 (HLVTCKGATV…LACFQDWVEA (139 aa)) enclose the Thioredoxin domain.

Belongs to the nucleoredoxin family.

Its function is as follows. May be involved in the maintenance of both the function and the viability of sensory neurons, including photoreceptors and olfactory neurons. The sequence is that of Nucleoredoxin-like protein 2 (NXNL2) from Homo sapiens (Human).